The primary structure comprises 308 residues: Putative gluconeogenesis factor (308 aa).

It belongs to the gluconeogenesis factor family.

Its subcellular location is the cytoplasm. In terms of biological role, required for morphogenesis under gluconeogenic growth conditions. The chain is Putative gluconeogenesis factor from Pasteurella multocida (strain Pm70).